Consider the following 107-residue polypeptide: Phosphoribosyl-ATP pyrophosphatase (107 aa).

The protein belongs to the PRA-PH family.

The protein resides in the cytoplasm. It catalyses the reaction 1-(5-phospho-beta-D-ribosyl)-ATP + H2O = 1-(5-phospho-beta-D-ribosyl)-5'-AMP + diphosphate + H(+). Its pathway is amino-acid biosynthesis; L-histidine biosynthesis; L-histidine from 5-phospho-alpha-D-ribose 1-diphosphate: step 2/9. The sequence is that of Phosphoribosyl-ATP pyrophosphatase from Methylobacterium nodulans (strain LMG 21967 / CNCM I-2342 / ORS 2060).